The chain runs to 407 residues: Dephospho-CoA kinase (407 aa).

The region spanning 3 to 201 (RIGLTGGIGA…ERIVPFAHNL (199 aa)) is the DPCK domain. 11 to 16 (GAGKSA) contacts ATP. Residues 196-407 (PFAHNLSTRQ…DWADSTGWKP (212 aa)) are UPF0157.

This sequence in the N-terminal section; belongs to the CoaE family. In the C-terminal section; belongs to the UPF0157 (GrpB) family.

Its subcellular location is the cytoplasm. It carries out the reaction 3'-dephospho-CoA + ATP = ADP + CoA + H(+). It participates in cofactor biosynthesis; coenzyme A biosynthesis; CoA from (R)-pantothenate: step 5/5. Catalyzes the phosphorylation of the 3'-hydroxyl group of dephosphocoenzyme A to form coenzyme A. The protein is Dephospho-CoA kinase of Mycolicibacterium paratuberculosis (strain ATCC BAA-968 / K-10) (Mycobacterium paratuberculosis).